The chain runs to 127 residues: Large ribosomal subunit protein bL20 (127 aa).

This sequence belongs to the bacterial ribosomal protein bL20 family.

Its function is as follows. Binds directly to 23S ribosomal RNA and is necessary for the in vitro assembly process of the 50S ribosomal subunit. It is not involved in the protein synthesizing functions of that subunit. In Akkermansia muciniphila (strain ATCC BAA-835 / DSM 22959 / JCM 33894 / BCRC 81048 / CCUG 64013 / CIP 107961 / Muc), this protein is Large ribosomal subunit protein bL20.